Consider the following 668-residue polypeptide: Fructose-1,6-bisphosphatase class 3 (668 aa).

Belongs to the FBPase class 3 family. Mn(2+) is required as a cofactor.

It catalyses the reaction beta-D-fructose 1,6-bisphosphate + H2O = beta-D-fructose 6-phosphate + phosphate. It functions in the pathway carbohydrate biosynthesis; gluconeogenesis. This Clostridium botulinum (strain Langeland / NCTC 10281 / Type F) protein is Fructose-1,6-bisphosphatase class 3.